We begin with the raw amino-acid sequence, 588 residues long: L-fucose isomerase (588 aa).

Catalysis depends on proton acceptor residues Glu-335 and Asp-359. Positions 335, 359, and 525 each coordinate Mn(2+).

It belongs to the L-fucose isomerase family. It depends on Mn(2+) as a cofactor.

It localises to the cytoplasm. The catalysed reaction is L-fucose = L-fuculose. Its pathway is carbohydrate degradation; L-fucose degradation; L-lactaldehyde and glycerone phosphate from L-fucose: step 1/3. Its function is as follows. Converts the aldose L-fucose into the corresponding ketose L-fuculose. The sequence is that of L-fucose isomerase from Streptococcus pneumoniae (strain JJA).